The chain runs to 75 residues: MAFLKKSLFLVLFLGLVSLSMCEEEKRENEVEEEQEDDEQSELRRSLRSSIKDMAAAAGRAALNAVNGIVNPGEQ.

Positions 1–22 (MAFLKKSLFLVLFLGLVSLSMC) are cleaved as a signal peptide. The propeptide occupies 23–45 (EEEKRENEVEEEQEDDEQSELRR). Positions 26 to 46 (KRENEVEEEQEDDEQSELRRS) are disordered. Acidic residues predominate over residues 30-40 (EVEEEQEDDEQ). Proline amide is present on proline 72. Positions 74–75 (EQ) are excised as a propeptide.

This sequence belongs to the frog skin active peptide (FSAP) family. Dermaseptin subfamily. As to expression, expressed by the skin glands.

The protein resides in the secreted. The protein localises to the target cell membrane. In terms of biological role, antimicrobial peptide with weak activity against Gram-positive and Gram-negative bacteria and fungi. Has been tested against E.coli (MIC=96.06-256 uM), S.aureus (MIC&gt;192.12 uM), K.pneumoniae (MIC&gt;189.00 uM) and C.albicans (MIC=384.24-1024 uM). Probably acts by disturbing membrane functions with its alpha-helical amphipathic structure. May penetrate bacterial membranes, but stay at the mammalian membrane surface. Does not show hemolytic activity. Does not interact at all with cardiolipin. The chain is Dermaseptin-SP5 from Agalychnis spurrelli (Gliding leaf frog).